Reading from the N-terminus, the 173-residue chain is Crossover junction endodeoxyribonuclease RuvC (173 aa).

Catalysis depends on residues Asp-8, Glu-67, and Asp-139. Mg(2+) is bound by residues Asp-8, Glu-67, and Asp-139.

The protein belongs to the RuvC family. As to quaternary structure, homodimer which binds Holliday junction (HJ) DNA. The HJ becomes 2-fold symmetrical on binding to RuvC with unstacked arms; it has a different conformation from HJ DNA in complex with RuvA. In the full resolvosome a probable DNA-RuvA(4)-RuvB(12)-RuvC(2) complex forms which resolves the HJ. It depends on Mg(2+) as a cofactor.

The protein resides in the cytoplasm. The catalysed reaction is Endonucleolytic cleavage at a junction such as a reciprocal single-stranded crossover between two homologous DNA duplexes (Holliday junction).. In terms of biological role, the RuvA-RuvB-RuvC complex processes Holliday junction (HJ) DNA during genetic recombination and DNA repair. Endonuclease that resolves HJ intermediates. Cleaves cruciform DNA by making single-stranded nicks across the HJ at symmetrical positions within the homologous arms, yielding a 5'-phosphate and a 3'-hydroxyl group; requires a central core of homology in the junction. The consensus cleavage sequence is 5'-(A/T)TT(C/G)-3'. Cleavage occurs on the 3'-side of the TT dinucleotide at the point of strand exchange. HJ branch migration catalyzed by RuvA-RuvB allows RuvC to scan DNA until it finds its consensus sequence, where it cleaves and resolves the cruciform DNA. The protein is Crossover junction endodeoxyribonuclease RuvC of Salmonella arizonae (strain ATCC BAA-731 / CDC346-86 / RSK2980).